We begin with the raw amino-acid sequence, 255 residues long: Hydroxyacylglutathione hydrolase (255 aa).

Zn(2+)-binding residues include H53, H55, D57, H58, H110, D127, and H165.

This sequence belongs to the metallo-beta-lactamase superfamily. Glyoxalase II family. In terms of assembly, monomer. The cofactor is Zn(2+).

The catalysed reaction is an S-(2-hydroxyacyl)glutathione + H2O = a 2-hydroxy carboxylate + glutathione + H(+). It functions in the pathway secondary metabolite metabolism; methylglyoxal degradation; (R)-lactate from methylglyoxal: step 2/2. Thiolesterase that catalyzes the hydrolysis of S-D-lactoyl-glutathione to form glutathione and D-lactic acid. The polypeptide is Hydroxyacylglutathione hydrolase (Xanthomonas campestris pv. campestris (strain 8004)).